The chain runs to 339 residues: D-alanine--D-alanine ligase (339 aa).

Residues 126–333 enclose the ATP-grasp domain; sequence KQVLDSAGIP…YSELVTRLVE (208 aa). Position 158–213 (158–213) interacts with ATP; the sequence is AAELGYPLFVKPANLGSSVGISKVGSPEELDAALTLAFGLDRRVILEAMTPHKPRE. Asp-286, Glu-300, and Asn-302 together coordinate Mg(2+).

This sequence belongs to the D-alanine--D-alanine ligase family. The cofactor is Mg(2+). Mn(2+) serves as cofactor.

The protein localises to the cytoplasm. It carries out the reaction 2 D-alanine + ATP = D-alanyl-D-alanine + ADP + phosphate + H(+). The protein operates within cell wall biogenesis; peptidoglycan biosynthesis. Functionally, cell wall formation. This Deinococcus radiodurans (strain ATCC 13939 / DSM 20539 / JCM 16871 / CCUG 27074 / LMG 4051 / NBRC 15346 / NCIMB 9279 / VKM B-1422 / R1) protein is D-alanine--D-alanine ligase.